A 191-amino-acid polypeptide reads, in one-letter code: ECF RNA polymerase sigma-E factor (191 aa).

Positions 1–153 are binds RNAP core; sequence MSEQLTDQVL…MAITLRELDG (153 aa). Residues 25-92 are sigma-70 factor domain-2; sequence LVVRYQHKVA…KNYLVAQGRR (68 aa). The Polymerase core binding signature appears at 48 to 61; the sequence is DVVQESFIKAYRAL. The interval 129–180 is sigma-70 factor domain-4; the sequence is QIVFRTIESLPEDLRMAITLRELDGLSYEEIAAIMDCPVGTVRSRIFRAREA. A DNA-binding region (H-T-H motif) is located at residues 156–175; it reads YEEIAAIMDCPVGTVRSRIF.

Belongs to the sigma-70 factor family. ECF subfamily. As to quaternary structure, interacts transiently with the RNAP catalytic core formed by RpoA, RpoB, RpoC and RpoZ (2 alpha, 1 beta, 1 beta' and 1 omega subunit) to form the RNAP holoenzyme that can initiate transcription. Interacts 1:1 with anti-sigma-E factor RseA which prevents binding to RNAP catalytic core.

The protein localises to the cytoplasm. ECF sigma-E is held in an inactive form by its cognate anti-sigma factor (RseA) until released by regulated intramembrane proteolysis (RIP). RIP occurs when an extracytoplasmic signal (periplasmic, acid or heat stress) triggers a concerted proteolytic cascade to transmit information and elicit cellular responses. In S.typhimurium there are 2 cascades, the heat shock response which depends on DegS and RseP, and acid response which depends only on RseP. The anti-sigma factor RseA is an inner membrane protein, binding sigma-E in the cytoplasm and RseB in the periplasm. RseA is first cut extracytoplasmically (site-1 protease, S1P, by DegS), then within the membrane itself (site-2 protease, S2P, by RseP), while cytoplasmic proteases (predominantly ClpX-ClpP) finish degrading the regulatory protein, liberating sigma-E. Degradation of RseA requires 2 signals to activate DegS; an outer membrane protein (OMP) signal activates DegS, while an LPS signal causes release of RseB from RseA, freeing RseA to be cleaved. OMP stress can be abrogated by overexpression of the sRNA rybB. In terms of biological role, sigma factors are initiation factors that promote the attachment of RNA polymerase (RNAP) to specific initiation sites and are then released. Extracytoplasmic function (ECF) sigma-E controls the envelope stress response, responding to periplasmic protein stress, increased levels of periplasmic lipopolysaccharide (LPS) as well as acid stress, heat shock and oxidative stress; it controls protein processing in the extracytoplasmic compartment. This chain is ECF RNA polymerase sigma-E factor (rpoE), found in Salmonella typhimurium (strain 14028s / SGSC 2262).